A 717-amino-acid polypeptide reads, in one-letter code: Polyribonucleotide nucleotidyltransferase (717 aa).

Aspartate 487 and aspartate 493 together coordinate Mg(2+). The KH domain occupies 554-613 (PKIITMAINPDKIRDVIGPSGKQINKIIEETGVKIDIEQDGTVFISSINQEMNEKAKKII). The 69-residue stretch at 623 to 691 (GEIYLGKVKR…KQGRVNLSRK (69 aa)) folds into the S1 motif domain.

Belongs to the polyribonucleotide nucleotidyltransferase family. The cofactor is Mg(2+).

The protein resides in the cytoplasm. The enzyme catalyses RNA(n+1) + phosphate = RNA(n) + a ribonucleoside 5'-diphosphate. Functionally, involved in mRNA degradation. Catalyzes the phosphorolysis of single-stranded polyribonucleotides processively in the 3'- to 5'-direction. This chain is Polyribonucleotide nucleotidyltransferase, found in Bacillus mycoides (strain KBAB4) (Bacillus weihenstephanensis).